A 610-amino-acid chain; its full sequence is Chaperone protein DnaK (610 aa).

Position 173 is a phosphothreonine; by autocatalysis (Thr173). Residues 579 to 592 show a composition bias toward low complexity; sequence QQQQAQGANAGQNN. A disordered region spans residues 579–610; sequence QQQQAQGANAGQNNDSTVEDAEFKEVKDDDKK. Positions 599–610 are enriched in basic and acidic residues; it reads AEFKEVKDDDKK.

This sequence belongs to the heat shock protein 70 family.

Acts as a chaperone. The sequence is that of Chaperone protein DnaK from Staphylococcus aureus (strain bovine RF122 / ET3-1).